The sequence spans 295 residues: Cytidine deaminase (295 aa).

2 consecutive CMP/dCMP-type deaminase domains span residues 48 to 168 (TDNQ…FGPS) and 187 to 295 (EDDD…YLSL). Position 89–91 (89–91 (NME)) interacts with substrate. H102 contributes to the Zn(2+) binding site. E104 (proton donor) is an active-site residue. 2 residues coordinate Zn(2+): C129 and C132.

Belongs to the cytidine and deoxycytidylate deaminase family. In terms of assembly, homodimer. The cofactor is Zn(2+).

It catalyses the reaction cytidine + H2O + H(+) = uridine + NH4(+). It carries out the reaction 2'-deoxycytidine + H2O + H(+) = 2'-deoxyuridine + NH4(+). In terms of biological role, this enzyme scavenges exogenous and endogenous cytidine and 2'-deoxycytidine for UMP synthesis. This is Cytidine deaminase from Vibrio vulnificus (strain CMCP6).